Here is a 510-residue protein sequence, read N- to C-terminus: Mitochondrial metal transporter 1 (510 aa).

The disordered stretch occupies residues 120 to 141 (ADKPSSLNLHSHTHSHGHTHSH). Basic residues predominate over residues 130 to 141 (SHTHSHGHTHSH). A run of 6 helical transmembrane segments spans residues 165 to 185 (WVGL…GIVF), 194 to 214 (AIHA…VGLA), 241 to 261 (LAMA…GPVI), 286 to 306 (VTDI…EWIF), 333 to 353 (LTSL…IQSL), and 356 to 376 (IGGL…MCIA).

Belongs to the cation diffusion facilitator (CDF) transporter (TC 2.A.4) family. SLC30A subfamily.

Its subcellular location is the mitochondrion membrane. In terms of biological role, mitochondrial metal transporter involved in mitochondrial iron accumulation. This chain is Mitochondrial metal transporter 1 (MMT1), found in Saccharomyces cerevisiae (strain ATCC 204508 / S288c) (Baker's yeast).